We begin with the raw amino-acid sequence, 682 residues long: K(+)-insensitive pyrophosphate-energized proton pump 2 (682 aa).

5 helical membrane-spanning segments follow: residues 1 to 21, 56 to 76, 78 to 98, 130 to 150, and 160 to 180; these read MELFPIIPAGGILALLVALYM, TIAGLALIVAVLLALLTRQYH, AVAFITGAFASALSGYIGMYV, LAVTALSLLGVTSLFYAFGGA, and IVGFGFGASFVALFAQLSGGI. Position 183 (lysine 183) interacts with substrate. The Mg(2+) site is built by aspartate 186, aspartate 190, and aspartate 216. 7 helical membrane passes run 237–257, 258–278, 291–311, 318–338, 353–373, 375–395, and 404–424; these read IGAMILGIALVPFFGVKGIVF, PLVARAAGIIASIIGMFFVRA, GYIVTSILAIIFLYPISRYML, FIYFYGAGIIGIVLSFIFVLI, IARASITGPATNIISGVAVGF, STALPVVFISLAILGAYWLGL, and LYGTAVATMGMLSTAAYILAM. Aspartate 432 contributes to the Mg(2+) binding site. Transmembrane regions (helical) follow at residues 468-488, 506-526, 574-594, and 595-615; these read YAIGSAALATFLLFSAYIDEV, EVFVGAFIAAMMVLLFSSTAI, MVLPGLIVVITPIIVGLVLKA, and EAAAAFLMVGTITGVIVALFL. 3 residues coordinate Ca(2+): aspartate 623, aspartate 649, and aspartate 653. Lysine 656 is a substrate binding site. Residues 662 to 682 form a helical membrane-spanning segment; sequence SLHVLVKLISTITLVLAGLFI.

It belongs to the H(+)-translocating pyrophosphatase (TC 3.A.10) family. K(+)-insensitive subfamily. Homodimer. The cofactor is Mg(2+).

The protein localises to the cell membrane. It carries out the reaction diphosphate + H2O + H(+)(in) = 2 phosphate + 2 H(+)(out). In terms of biological role, proton pump that utilizes the energy of pyrophosphate hydrolysis as the driving force for proton movement across the membrane. Generates a proton motive force. This chain is K(+)-insensitive pyrophosphate-energized proton pump 2, found in Moorella thermoacetica (strain ATCC 39073 / JCM 9320).